Consider the following 373-residue polypeptide: Caspase-4 (373 aa).

The interval 1-59 (MAENKHPDKPLKVLEQLGKEVLTEYLEKLVQSNVLKLKEEDKQKFNNAERSDKRWVFVD) is required for LPS-binding. The propeptide occupies 1–80 (MAENKHPDKP…MLLQTFFSVD (80 aa)). The 91-residue stretch at 1–91 (MAENKHPDKP…GSHHGEANLE (91 aa)) folds into the CARD domain. Position 83 is a phosphoserine (Ser83). Residues His206 and Cys254 contribute to the active site. The propeptide occupies 267 to 285 (SSKPQLCRGVDLPRNMEAD). Arg310 carries the (Microbial infection) ADP-riboxanated arginine modification.

This sequence belongs to the peptidase C14A family. As to quaternary structure, heterotetramer that consists of two anti-parallel arranged heterodimers, each one formed by a 20 kDa (Caspase-4 subunit p20) and a 10 kDa (Caspase-4 subunit p10) subunit. Upon direct LPS-binding, forms large homooligomers, resulting in its activation. These oligomers are often referred to as 'non-canonical inflammasomes'. In its precursor form, interacts with TMEM214; this interaction is required for association with the endoplasmic reticulum membrane. Interacts with CASP1. Interacts with NOD2. Interacts with Serpinb1a, Serpinb1b and Serpinb1c; these interactions regulate CASP4 activity. In terms of assembly, heterotetramer that consists of two anti-parallel arranged heterodimers, each one formed by a 20 kDa (Caspase-4 subunit p20) and a 10 kDa (Caspase-4 subunit p10) subunit. In terms of processing, in response to activation signals, undergoes autoproteolytic cleavage and activation. (Microbial infection) ADP-riboxanation by S.flexneri OspC3 blocks CASP4 autoprocessing, preventing CASP4 activation and ability to recognize and cleave GSDMD, thereby thwarting the inflammasome/pyroptosis-mediated defense. Widely expressed, including in thymus, lung and spleen (at protein level). Very low levels, if any, in the brain.

The protein localises to the cytoplasm. Its subcellular location is the cytosol. It is found in the endoplasmic reticulum membrane. It localises to the mitochondrion. The protein resides in the inflammasome. The protein localises to the secreted. The catalysed reaction is Strict requirement for Asp at the P1 position and has a preferred cleavage sequence of (Ile/Leu/Val/Phe)-Gly-His-Asp-|-.. Its activity is regulated as follows. Activated by homooligomerization induced by direct binding to cytosolic LPS, in a TLR4-independent manner. In addition to LPS, CASP4/CASP11 may also be activated by oxidized phospholipid 1-palmitoyl-2-arachidonoyl- sn-glycero-3-phosphorylcholine, an oxidized phospholipid (oxPAPC), in dendritic cells, promoting adaptive immunity. The role of oxPAPC is however unclear and another report suggests that oxPAPC competes with LPS-binding and inhibits the non-canonical inflammasome in macrophages. Inflammatory caspase that acts as the effector of the non-canonical inflammasome by mediating lipopolysaccharide (LPS)-induced pyroptosis. Also indirectly activates the NLRP3 and NLRP6 inflammasomes. Acts as a thiol protease that cleaves a tetrapeptide after an Asp residue at position P1: catalyzes cleavage of CGAS and GSDMD. In contrast to its human ortholog, does not cleave IL18. Effector of the non-canonical inflammasome independently of NLRP3 inflammasome and CASP1: the non-canonical inflammasome promotes pyroptosis through GSDMD cleavage without involving secretion of cytokine IL1B and IL18. In the non-canonical inflammasome, CASP4/CASP11 is activated by direct binding to the lipid A moiety of LPS without the need of an upstream sensor. LPS-binding promotes CASP4/CASP11 activation and CASP4/CASP11-mediated cleavage of GSDMD, followed by pyroptosis of infected cells and their extrusion into the gut lumen. Also indirectly promotes secretion of mature cytokines (IL1A, IL18 and HMGB1) downstream of GSDMD-mediated pyroptosis via activation of the NLRP3 and NLRP6 inflammasomes. Involved in NLRP3-dependent CASP1 activation and IL1B and IL18 secretion in response to non-canonical activators, such as UVB radiation or cholera enterotoxin. Involved in NLRP6 inflammasome-dependent activation in response to lipoteichoic acid (LTA), a cell-wall component of Gram-positive bacteria, which leads to CASP1 activation and IL1B and IL18 secretion. Involved in LPS-induced IL6 secretion; this activity may not require caspase enzymatic activity. The non-canonical inflammasome is required for innate immunity to cytosolic, but not vacuolar, bacteria. Plays a crucial role in the restriction of S.typhimurium replication in colonic epithelial cells during infection. Activation of the non-canonical inflammasome in brain endothelial cells can lead to excessive pyroptosis, leading to blood-brain barrier breakdown. Pyroptosis limits bacterial replication, while cytokine secretion promotes the recruitment and activation of immune cells and triggers mucosal inflammation. May also act as an activator of adaptive immunity in dendritic cells, following activation by oxidized phospholipid 1-palmitoyl-2-arachidonoyl- sn-glycero-3-phosphorylcholine, an oxidized phospholipid (oxPAPC). Cleavage of GSDMD is not strictly dependent on the consensus cleavage site but depends on an exosite interface on CASP4/CASP11 that recognizes and binds the Gasdermin-D, C-terminal (GSDMD-CT) part. In contrast, it does not directly process IL1B. During non-canonical inflammasome activation, cuts CGAS and may play a role in the regulation of antiviral innate immune activation. This chain is Caspase-4, found in Mus musculus (Mouse).